The primary structure comprises 187 residues: Large ribosomal subunit protein uL5 (187 aa).

Belongs to the universal ribosomal protein uL5 family. Part of the 50S ribosomal subunit; part of the 5S rRNA/L5/L18/L25 subcomplex. Contacts the 5S rRNA and the P site tRNA. Forms a bridge to the 30S subunit in the 70S ribosome.

In terms of biological role, this is one of the proteins that bind and probably mediate the attachment of the 5S RNA into the large ribosomal subunit, where it forms part of the central protuberance. In the 70S ribosome it contacts protein S13 of the 30S subunit (bridge B1b), connecting the 2 subunits; this bridge is implicated in subunit movement. Contacts the P site tRNA; the 5S rRNA and some of its associated proteins might help stabilize positioning of ribosome-bound tRNAs. In Mycobacterium bovis (strain BCG / Tokyo 172 / ATCC 35737 / TMC 1019), this protein is Large ribosomal subunit protein uL5.